The following is a 1429-amino-acid chain: Inactive rhomboid protein 1 (1429 aa).

Disordered stretches follow at residues Met1–Arg36, Gly560–Pro579, and Thr740–Ala766. Topologically, residues Met1–Thr843 are cytoplasmic. The span at Ser22–Ser33 shows a compositional bias: low complexity. 2 stretches are compositionally biased toward polar residues: residues Ala564–Asn573 and Thr740–Gln763. The helical transmembrane segment at Val844–Gly864 threads the bilayer. Topologically, residues Ser865 to Ser1099 are lumenal. A helical membrane pass occupies residues Leu1100–Leu1120. Residues Ala1121–Arg1131 lie on the Cytoplasmic side of the membrane. Residues Thr1132–Pro1152 form a helical membrane-spanning segment. Topologically, residues His1153–Glu1156 are lumenal. A helical membrane pass occupies residues Val1157 to Met1177. The Cytoplasmic portion of the chain corresponds to His1178–His1186. A helical membrane pass occupies residues Ile1187–Tyr1207. The Lumenal segment spans residues Gln1208–Asn1210. A helical membrane pass occupies residues Phe1211–Phe1231. Residues Thr1232 to Leu1245 lie on the Cytoplasmic side of the membrane. Residues Ile1246–Ile1266 traverse the membrane as a helical segment. Residues His1267–Leu1429 are Lumenal-facing.

It belongs to the peptidase S54 family. In terms of tissue distribution, specifically expressed in the nervous system and in brain.

It localises to the endoplasmic reticulum membrane. In terms of biological role, rhomboid protease-like protein which has no protease activity but regulates the secretion of several ligands of the epidermal growth factor receptor. Indirectly activates the epidermal growth factor receptor signaling pathway and may thereby regulate sleep, cell survival, proliferation and migration. The polypeptide is Inactive rhomboid protein 1 (rho-5) (Drosophila melanogaster (Fruit fly)).